The sequence spans 611 residues: O-fucosyltransferase 8 (611 aa).

Residues M1–L29 form a disordered region. The span at P10–L26 shows a compositional bias: basic and acidic residues. Residues I78–I98 form a helical; Signal-anchor for type II membrane protein membrane-spanning segment. N-linked (GlcNAc...) asparagine glycans are attached at residues N115, N216, and N270. Residue H386–R388 coordinates substrate. Residue N506 is glycosylated (N-linked (GlcNAc...) asparagine).

Belongs to the glycosyltransferase GT106 family.

It is found in the membrane. Its pathway is glycan metabolism. In Arabidopsis thaliana (Mouse-ear cress), this protein is O-fucosyltransferase 8.